The sequence spans 671 residues: DNA ligase (671 aa).

Residues 32–36 (DAEYD), 81–82 (SL), and E113 contribute to the NAD(+) site. K115 serves as the catalytic N6-AMP-lysine intermediate. NAD(+)-binding residues include R136, E173, K290, and K314. Zn(2+)-binding residues include C408, C411, C426, and C432. The BRCT domain maps to 593-671 (EIDSPFAGKT…EAEMIRLLGA (79 aa)).

It belongs to the NAD-dependent DNA ligase family. LigA subfamily. Requires Mg(2+) as cofactor. The cofactor is Mn(2+).

The enzyme catalyses NAD(+) + (deoxyribonucleotide)n-3'-hydroxyl + 5'-phospho-(deoxyribonucleotide)m = (deoxyribonucleotide)n+m + AMP + beta-nicotinamide D-nucleotide.. Functionally, DNA ligase that catalyzes the formation of phosphodiester linkages between 5'-phosphoryl and 3'-hydroxyl groups in double-stranded DNA using NAD as a coenzyme and as the energy source for the reaction. It is essential for DNA replication and repair of damaged DNA. This chain is DNA ligase, found in Salmonella newport (strain SL254).